Consider the following 248-residue polypeptide: AA9 family lytic polysaccharide monooxygenase G (248 aa).

An N-terminal signal peptide occupies residues 1-21 (MLPNAAGLLVAGVVSLSGVAA). Histidine 22 provides a ligand contact to Cu(2+). Residue asparagine 58 is glycosylated (N-linked (GlcNAc...) asparagine). A disulfide bridge links cysteine 77 with cysteine 195. Histidine 107 is a Cu(2+) binding site. Position 190 (glutamine 190) interacts with O2. Tyrosine 192 is a Cu(2+) binding site. Asparagine 203 is a glycosylation site (N-linked (GlcNAc...) asparagine).

It belongs to the polysaccharide monooxygenase AA9 family. Requires Cu(2+) as cofactor.

It localises to the secreted. The catalysed reaction is [(1-&gt;4)-beta-D-glucosyl]n+m + reduced acceptor + O2 = 4-dehydro-beta-D-glucosyl-[(1-&gt;4)-beta-D-glucosyl]n-1 + [(1-&gt;4)-beta-D-glucosyl]m + acceptor + H2O.. Its function is as follows. Lytic polysaccharide monooxygenase (LPMO) that depolymerizes crystalline and amorphous polysaccharides via the oxidation of scissile alpha- or beta-(1-4)-glycosidic bonds, yielding C1 or C4 oxidation products. Catalysis by LPMOs requires the reduction of the active-site copper from Cu(II) to Cu(I) by a reducing agent and H(2)O(2) or O(2) as a cosubstrate. The chain is AA9 family lytic polysaccharide monooxygenase G from Malbranchea cinnamomea (Thermophilic fungus).